Consider the following 278-residue polypeptide: HTH-type transcriptional activator RhaS (278 aa).

The HTH araC/xylS-type domain occupies 174 to 272 (NLLLAWLEDH…NWSPRDIRQG (99 aa)). 2 DNA-binding regions (H-T-H motif) span residues 191 to 212 (DAVA…KQQT) and 239 to 262 (VTDI…HREF).

As to quaternary structure, binds DNA as a dimer.

Its subcellular location is the cytoplasm. Functionally, activates expression of the rhaBAD and rhaT operons. This chain is HTH-type transcriptional activator RhaS, found in Shigella boydii serotype 18 (strain CDC 3083-94 / BS512).